The chain runs to 291 residues: Tetrahydromethanopterin:alpha-L-glutamate ligase (291 aa).

One can recognise an ATP-grasp domain in the interval 101 to 286; that stretch reads SVFLELNNLP…IADKLLEKII (186 aa). ATP-binding positions include K136, 175 to 187, and R203; that span reads QEFIKPVRNEHRD. The Mg(2+) site is built by D247, E259, and N261. Residues D247, E259, and N261 each contribute to the Mn(2+) site.

The protein belongs to the RimK family. MptN subfamily. In terms of assembly, homodimer. The cofactor is Mg(2+). Requires Mn(2+) as cofactor.

The catalysed reaction is 5,6,7,8-tetrahydromethanopterin + L-glutamate + ATP = 5,6,7,8-tetrahydrosarcinapterin + ADP + phosphate + H(+). Its pathway is cofactor biosynthesis; 5,6,7,8-tetrahydrosarcinapterin biosynthesis. Catalyzes the ATP or GTP-dependent addition of one L-glutamate molecule to tetrahydromethanopterin, producing tetrahydrosarcinapterin. In Methanocaldococcus jannaschii (strain ATCC 43067 / DSM 2661 / JAL-1 / JCM 10045 / NBRC 100440) (Methanococcus jannaschii), this protein is Tetrahydromethanopterin:alpha-L-glutamate ligase (mptN).